Consider the following 542-residue polypeptide: Chitinase 1 (542 aa).

A GH18 domain is found at 68–506; that stretch reads FNVLCYFTDW…NAAHEGLKRR (439 aa). Residues 186–187 and 213–216 each bind chitin; these read QE and GGWS. Glu-256 acts as the Proton donor in catalysis. Chitin-binding positions include Tyr-257, 323–326, and Trp-486; that span reads MTYD.

The protein belongs to the glycosyl hydrolase 18 family. As to quaternary structure, semipurified toxin complex consists of at least YenA1-YenA2-YenB-YenC1-YenC2-Chi1-Chi2. The Yen-TC:K9 subcomplex is about 26 nm tall and 22 nm in diameter with 5-fold symmetry and 5 copies of YenA1, YenA2, Chi1 and Chi2; the chitinase subunits may be solvent accessible on the exterior the complex. The Yen-TC:K9 subcomplex has no insecticidal activity. The native complex with additional YenB, YenC1 and YenC2 subunits is 16 nm taller and is insecticidal; the toxicity-conferring subunits are present at about 1 copy each.

The protein resides in the secreted. The catalysed reaction is Random endo-hydrolysis of N-acetyl-beta-D-glucosaminide (1-&gt;4)-beta-linkages in chitin and chitodextrins.. Its activity is regulated as follows. Toxin complex is secreted when grown at 25 degrees Celsius or less; at higher temperatures the proteins are present intracellularly but not secreted. Part of an orally active toxin complex (TC) with strong insecticidal effects on larvae of the Coleoptera Costelytra zealandica, Acrossidius tasmania and Adoryphorus couloni and some Lepidoptera larvae. The TC has an endochitinase activity. This subunit might aid infection by degradation of the larval peritrophic membrane. This chain is Chitinase 1, found in Yersinia entomophaga.